The primary structure comprises 207 residues: Urease accessory protein UreE (207 aa).

A compositionally biased stretch (basic and acidic residues) spans 170–194 (EHHGHSHSHSHDHDHDHDHDHDHQH). The interval 170-207 (EHHGHSHSHSHDHDHDHDHDHDHQHGPCCSHGHHHGHR) is disordered.

This sequence belongs to the UreE family.

The protein localises to the cytoplasm. Functionally, involved in urease metallocenter assembly. Binds nickel. Probably functions as a nickel donor during metallocenter assembly. The protein is Urease accessory protein UreE of Burkholderia pseudomallei (strain 1106a).